Reading from the N-terminus, the 388-residue chain is Succinate--CoA ligase [ADP-forming] subunit beta (388 aa).

The region spanning 9-244 (KQLFARYGLP…QSQEDPRAAQ (236 aa)) is the ATP-grasp domain. Residues Lys46, 53-55 (GRG), Glu99, Thr102, and Glu107 each bind ATP. Mg(2+) is bound by residues Asn199 and Asp213. Substrate is bound by residues Asn264 and 321–323 (GIV).

This sequence belongs to the succinate/malate CoA ligase beta subunit family. In terms of assembly, heterotetramer of two alpha and two beta subunits. Requires Mg(2+) as cofactor.

It catalyses the reaction succinate + ATP + CoA = succinyl-CoA + ADP + phosphate. The catalysed reaction is GTP + succinate + CoA = succinyl-CoA + GDP + phosphate. It participates in carbohydrate metabolism; tricarboxylic acid cycle; succinate from succinyl-CoA (ligase route): step 1/1. Its function is as follows. Succinyl-CoA synthetase functions in the citric acid cycle (TCA), coupling the hydrolysis of succinyl-CoA to the synthesis of either ATP or GTP and thus represents the only step of substrate-level phosphorylation in the TCA. The beta subunit provides nucleotide specificity of the enzyme and binds the substrate succinate, while the binding sites for coenzyme A and phosphate are found in the alpha subunit. The polypeptide is Succinate--CoA ligase [ADP-forming] subunit beta (Shigella flexneri serotype 5b (strain 8401)).